The primary structure comprises 118 residues: Immunoglobulin heavy variable 4-31 (118 aa).

The first 19 residues, 1–19, serve as a signal peptide directing secretion; sequence MKHLWFFLLLVAAPRWVLS. Residues 20–44 are framework-1; sequence QVQLQESGPGLVKPSQTLSLTCTVS. The 99-residue stretch at 20–118 folds into the Ig-like domain; the sequence is QVQLQESGPG…ADTAVYYCAR (99 aa). Cysteines 41 and 116 form a disulfide. The tract at residues 45–54 is complementarity-determining-1; it reads GGSISSGGYY. A framework-2 region spans residues 55-71; sequence WSWIRQHPGKGLEWIGY. A complementarity-determining-2 region spans residues 72–78; the sequence is IYYSGST. A framework-3 region spans residues 79–116; that stretch reads YYNPSLKSLVTISVDTSKNQFSLKLSSVTAADTAVYYC. The segment at 117–118 is complementarity-determining-3; the sequence is AR.

As to quaternary structure, immunoglobulins are composed of two identical heavy chains and two identical light chains; disulfide-linked.

The protein resides in the secreted. It localises to the cell membrane. In terms of biological role, v region of the variable domain of immunoglobulin heavy chains that participates in the antigen recognition. Immunoglobulins, also known as antibodies, are membrane-bound or secreted glycoproteins produced by B lymphocytes. In the recognition phase of humoral immunity, the membrane-bound immunoglobulins serve as receptors which, upon binding of a specific antigen, trigger the clonal expansion and differentiation of B lymphocytes into immunoglobulins-secreting plasma cells. Secreted immunoglobulins mediate the effector phase of humoral immunity, which results in the elimination of bound antigens. The antigen binding site is formed by the variable domain of one heavy chain, together with that of its associated light chain. Thus, each immunoglobulin has two antigen binding sites with remarkable affinity for a particular antigen. The variable domains are assembled by a process called V-(D)-J rearrangement and can then be subjected to somatic hypermutations which, after exposure to antigen and selection, allow affinity maturation for a particular antigen. The polypeptide is Immunoglobulin heavy variable 4-31 (Homo sapiens (Human)).